Consider the following 96-residue polypeptide: Elicitor peptide 3 (96 aa).

Residues 1–73 (MENLRNGEDN…EEEEEDGMTI (73 aa)) constitute a propeptide that is removed on maturation. The disordered stretch occupies residues 32–96 (SGLESSSSSS…PSSGKGGKHN (65 aa)). The segment covering 35–49 (ESSSSSSSSCDLSSS) has biased composition (low complexity). A compositionally biased stretch (acidic residues) spans 52–71 (EEDESIDIKEEEEEEEEDGM).

The protein belongs to the brassicaceae elicitor peptide family.

Its function is as follows. Elicitor of plant defense. This is Elicitor peptide 3 (PEP3) from Arabidopsis thaliana (Mouse-ear cress).